Reading from the N-terminus, the 321-residue chain is Acetyl-coenzyme A carboxylase carboxyl transferase subunit alpha (321 aa).

The region spanning 32–293 (DISEEIARLQ…KRVLQDQLKE (262 aa)) is the CoA carboxyltransferase C-terminal domain.

Belongs to the AccA family. In terms of assembly, acetyl-CoA carboxylase is a heterohexamer composed of biotin carboxyl carrier protein (AccB), biotin carboxylase (AccC) and two subunits each of ACCase subunit alpha (AccA) and ACCase subunit beta (AccD).

It localises to the cytoplasm. The catalysed reaction is N(6)-carboxybiotinyl-L-lysyl-[protein] + acetyl-CoA = N(6)-biotinyl-L-lysyl-[protein] + malonyl-CoA. It functions in the pathway lipid metabolism; malonyl-CoA biosynthesis; malonyl-CoA from acetyl-CoA: step 1/1. Functionally, component of the acetyl coenzyme A carboxylase (ACC) complex. First, biotin carboxylase catalyzes the carboxylation of biotin on its carrier protein (BCCP) and then the CO(2) group is transferred by the carboxyltransferase to acetyl-CoA to form malonyl-CoA. This Chromobacterium violaceum (strain ATCC 12472 / DSM 30191 / JCM 1249 / CCUG 213 / NBRC 12614 / NCIMB 9131 / NCTC 9757 / MK) protein is Acetyl-coenzyme A carboxylase carboxyl transferase subunit alpha.